We begin with the raw amino-acid sequence, 212 residues long: Orotate phosphoribosyltransferase (212 aa).

Lys-26 is a 5-phospho-alpha-D-ribose 1-diphosphate binding site. Position 34–35 (34–35 (FF)) interacts with orotate. 5-phospho-alpha-D-ribose 1-diphosphate contacts are provided by residues 72–73 (YK), Arg-98, Lys-99, Lys-102, His-104, and 123–131 (DDVISAGTS). Ser-127 and Arg-155 together coordinate orotate.

Belongs to the purine/pyrimidine phosphoribosyltransferase family. PyrE subfamily. Homodimer. Requires Mg(2+) as cofactor.

The enzyme catalyses orotidine 5'-phosphate + diphosphate = orotate + 5-phospho-alpha-D-ribose 1-diphosphate. It functions in the pathway pyrimidine metabolism; UMP biosynthesis via de novo pathway; UMP from orotate: step 1/2. In terms of biological role, catalyzes the transfer of a ribosyl phosphate group from 5-phosphoribose 1-diphosphate to orotate, leading to the formation of orotidine monophosphate (OMP). This is Orotate phosphoribosyltransferase from Thiobacillus denitrificans (strain ATCC 25259 / T1).